Here is a 279-residue protein sequence, read N- to C-terminus: 4-deoxy-L-threo-5-hexosulose-uronate ketol-isomerase (279 aa).

Zn(2+) contacts are provided by His-197, His-199, Glu-204, and His-246.

The protein belongs to the KduI family. Zn(2+) is required as a cofactor.

The catalysed reaction is 5-dehydro-4-deoxy-D-glucuronate = 3-deoxy-D-glycero-2,5-hexodiulosonate. It participates in glycan metabolism; pectin degradation; 2-dehydro-3-deoxy-D-gluconate from pectin: step 4/5. Its function is as follows. Catalyzes the isomerization of 5-dehydro-4-deoxy-D-glucuronate to 3-deoxy-D-glycero-2,5-hexodiulosonate. The chain is 4-deoxy-L-threo-5-hexosulose-uronate ketol-isomerase from Kineococcus radiotolerans (strain ATCC BAA-149 / DSM 14245 / SRS30216).